A 228-amino-acid polypeptide reads, in one-letter code: NADH-quinone oxidoreductase subunit C (228 aa).

It belongs to the complex I 30 kDa subunit family. As to quaternary structure, NDH-1 is composed of 14 different subunits. Subunits NuoB, C, D, E, F, and G constitute the peripheral sector of the complex.

It is found in the cell membrane. The enzyme catalyses a quinone + NADH + 5 H(+)(in) = a quinol + NAD(+) + 4 H(+)(out). Functionally, NDH-1 shuttles electrons from NADH, via FMN and iron-sulfur (Fe-S) centers, to quinones in the respiratory chain. The immediate electron acceptor for the enzyme in this species is believed to be a menaquinone. Couples the redox reaction to proton translocation (for every two electrons transferred, four hydrogen ions are translocated across the cytoplasmic membrane), and thus conserves the redox energy in a proton gradient. This Mycobacteroides abscessus (strain ATCC 19977 / DSM 44196 / CCUG 20993 / CIP 104536 / JCM 13569 / NCTC 13031 / TMC 1543 / L948) (Mycobacterium abscessus) protein is NADH-quinone oxidoreductase subunit C.